The sequence spans 267 residues: MGSACIKVTKYFLFLFNLIFFILGAVILGFGVWILADKSSFISVLQTSSSSLRMGAYVFIGVGAVTMLMGFLGCIGAVNEVRCLLGLYFAFLLLILIAQVTAGALFYFNMGKLKQEMGGIVTELIRDYNSSREDSLQDAWDYVQAQVKCCGWVSFYNWTDNAELMNRPEVTYPCSCEVKGEEDNSLSVRKGFCEAPGNRTQSGNHPEDWPVYQEGCMEKVQAWLQENLGIILGVGVGVAIIELLGMVLSICLCRHVHSEDYSKVPKY.

The Cytoplasmic portion of the chain corresponds to 1 to 11 (MGSACIKVTKY). The S-palmitoyl cysteine moiety is linked to residue Cys-5. The chain crosses the membrane as a helical span at residues 12-32 (FLFLFNLIFFILGAVILGFGV). Over 33–53 (WILADKSSFISVLQTSSSSLR) the chain is Extracellular. A helical membrane pass occupies residues 54–72 (MGAYVFIGVGAVTMLMGFL). Residues 73 to 83 (GCIGAVNEVRC) lie on the Cytoplasmic side of the membrane. Cys-74 is lipidated: S-palmitoyl cysteine. Residues 84–110 (LLGLYFAFLLLILIAQVTAGALFYFNM) traverse the membrane as a helical segment. At 111-228 (GKLKQEMGGI…KVQAWLQENL (118 aa)) the chain is on the extracellular side. N-linked (GlcNAc...) asparagine glycosylation is found at Asn-129, Asn-157, and Asn-198. The chain crosses the membrane as a helical span at residues 229 to 250 (GIILGVGVGVAIIELLGMVLSI). The Cytoplasmic segment spans residues 251–267 (CLCRHVHSEDYSKVPKY).

This sequence belongs to the tetraspanin (TM4SF) family. As to quaternary structure, forms homooligomers. Interacts directly with IGSF8. Interacts with EGFR. Interacts with VEGFA and PDGFB. Interacts with ITGA4. Interacts with ITGA6; this interaction reduces ITGA6 cell surface expression. Interacts with ITGB1. Interacts with TLR4; this interaction inhibits TLR4-mediated signaling pathway. Interacts with TLR9. Interacts with PLAUR. In terms of processing, palmitoylated. Palmitoylation contributes to oligomerization and surface expression. In terms of tissue distribution, lymphoid specific.

The protein resides in the cell membrane. Its subcellular location is the cytoplasmic vesicle. It is found in the phagosome. Its function is as follows. Structural component of specialized membrane microdomains known as tetraspanin-enriched microdomains (TERMs), which act as platforms for receptor clustering and signaling. Participates thereby in diverse biological functions such as cell signal transduction, adhesion, migration and protein trafficking. Acts as a attenuator of EGF signaling, facilitating ligand-induced endocytosis of the receptor and its subsequent desensitization. Mechanistically, modulates ligand-induced ubiquitination and trafficking of EGFR via E3 ligase CBL phosphorylation by PKC. Increases cell-matrix adhesion by regulating the membrane organization of integrin alpha4/ITA4. Modulates adhesion and suppresses cell migration through other integrins such as the alpha6/ITGA6 and beta1/ITGB1. Decreases cell-associated plasminogen activation by interfering with the interaction between urokinase-type plasminogen activator/PLAU and its receptor PLAUR. Associates with CD4 or CD8 and delivers costimulatory signals for the TCR/CD3 pathway. Plays a role in TLR9 trafficking to acidified CpG-containing compartments by controlling interaction between TLR9 and VAMP3 and subsequent myddosome assembly. Inhibits LPS-induced inflammatory response by preventing binding of LPS to TLR4 on the cell surface. Plays a role in the activation of macrophages into anti-inflammatory phenotypes. Independently of Toll-like receptor (TLR) signaling, is recruited to pathogen-containing phagosomes prior to fusion with lysosomes and thereby participates in antigen presentation. Also acts to control angiogenesis and switch angiogenic milieu to quiescent state by binding and sequestering VEGFA and PDGFB to inhibit the signaling they trigger via their respective cell surface receptor. The protein is CD82 antigen (CD82) of Homo sapiens (Human).